Consider the following 285-residue polypeptide: Bifunctional protein FolD (285 aa).

NADP(+)-binding positions include 166–168, S191, and T232; that span reads GRS.

The protein belongs to the tetrahydrofolate dehydrogenase/cyclohydrolase family. Homodimer.

It carries out the reaction (6R)-5,10-methylene-5,6,7,8-tetrahydrofolate + NADP(+) = (6R)-5,10-methenyltetrahydrofolate + NADPH. It catalyses the reaction (6R)-5,10-methenyltetrahydrofolate + H2O = (6R)-10-formyltetrahydrofolate + H(+). It functions in the pathway one-carbon metabolism; tetrahydrofolate interconversion. In terms of biological role, catalyzes the oxidation of 5,10-methylenetetrahydrofolate to 5,10-methenyltetrahydrofolate and then the hydrolysis of 5,10-methenyltetrahydrofolate to 10-formyltetrahydrofolate. This chain is Bifunctional protein FolD, found in Chloroflexus aggregans (strain MD-66 / DSM 9485).